Reading from the N-terminus, the 149-residue chain is Myoglobin (149 aa).

Residue A2 is modified to N-acetylalanine. Residues 2–143 form the Globin domain; it reads ADWDKVNSVW…ICSDIEKEYK (142 aa). H89 is a heme b binding site.

The protein belongs to the globin family. Monomeric.

The protein localises to the cytoplasm. It localises to the sarcoplasm. The enzyme catalyses Fe(III)-heme b-[protein] + nitric oxide + H2O = Fe(II)-heme b-[protein] + nitrite + 2 H(+). It carries out the reaction H2O2 + AH2 = A + 2 H2O. Functionally, monomeric heme protein which primary function is to store oxygen and facilitate its diffusion within muscle tissues. Reversibly binds oxygen through a pentacoordinated heme iron and enables its timely and efficient release as needed during periods of heightened demand. Depending on the oxidative conditions of tissues and cells, and in addition to its ability to bind oxygen, it also has a nitrite reductase activity whereby it regulates the production of bioactive nitric oxide. Under stress conditions, like hypoxia and anoxia, it also protects cells against reactive oxygen species thanks to its pseudoperoxidase activity. The protein is Myoglobin (mb) of Galeorhinus galeus (Tope shark).